The primary structure comprises 335 residues: Legumin type B (335 aa).

Disordered regions lie at residues 47–87 (PETQ…GNSV) and 102–155 (TEED…GRNG). Positions 105–118 (DTAKRLRSPRDKRN) are enriched in basic and acidic residues. Acidic residues predominate over residues 135 to 144 (QQEEEEEEEE). Residues 167 to 314 (ENIAQPARAD…AFGLRQRQVT (148 aa)) form the Cupin type-1 domain.

Belongs to the 11S seed storage protein (globulins) family. As to quaternary structure, hexamer; each subunit is composed of an acidic and a basic chain derived from a single precursor and linked by a disulfide bond.

In terms of biological role, this protein found in the seeds of many leguminous and non-leguminous plants is the source of sulfur-containing amino acids in seed meals. This is Legumin type B (LEB2) from Vicia faba (Broad bean).